A 152-amino-acid polypeptide reads, in one-letter code: Small ribosomal subunit protein uS15 (152 aa).

Over residues 1-10 the composition is skewed to basic residues; it reads MARMYARRRG. Residues 1 to 24 are disordered; sequence MARMYARRRGTSSSVRPYRKEAPE.

Belongs to the universal ribosomal protein uS15 family. Part of the 30S ribosomal subunit.

The polypeptide is Small ribosomal subunit protein uS15 (Methanoculleus marisnigri (strain ATCC 35101 / DSM 1498 / JR1)).